A 785-amino-acid polypeptide reads, in one-letter code: Sexual differentiation process protein isp4 (785 aa).

Positions 1 to 28 (MIGSINESPIEEHMNDSPSTKEKADSVD) are disordered. Positions 10–26 (IEEHMNDSPSTKEKADS) are enriched in basic and acidic residues. 16 helical membrane passes run 94–114 (MWTI…FFSL), 121–141 (LSVL…DLIF), 167–187 (LIVV…IILA), 196–216 (FGFG…YGLA), 264–284 (FFLY…YIFQ), 339–359 (LMNI…ALNF), 413–433 (ALAF…VILY), 461–481 (VPFY…MGTI), 490–510 (WWVI…IGIV), 512–532 (AITN…GYMY), 537–557 (LAMM…LAFA), 572–592 (IMFY…IGVL), 611–631 (YTCP…VIGP), 642–662 (TGLQ…WALW), 683–703 (GYIP…GLFF), and 732–752 (LSVI…PDWW).

The protein belongs to the oligopeptide OPT transporter family.

It localises to the endoplasmic reticulum membrane. The chain is Sexual differentiation process protein isp4 (isp4) from Schizosaccharomyces pombe (strain 972 / ATCC 24843) (Fission yeast).